The sequence spans 1382 residues: Hepatocyte growth factor receptor (1382 aa).

The first 24 residues, 1–24, serve as a signal peptide directing secretion; it reads MKAPTALAPGILLLLLTLAQRSHG. Over 25-935 the chain is Extracellular; sequence ECKEALVKSE…IVQPDQNFAG (911 aa). In terms of domain architecture, Sema spans 27–516; sequence KEALVKSEMN…TGKKITKIPL (490 aa). Asparagine 45 carries N-linked (GlcNAc...) asparagine glycosylation. 4 disulfide bridges follow: cysteine 95/cysteine 101, cysteine 98/cysteine 160, cysteine 133/cysteine 141, and cysteine 173/cysteine 176. An N-linked (GlcNAc...) asparagine glycan is attached at asparagine 106. 2 N-linked (GlcNAc...) asparagine glycosylation sites follow: asparagine 203 and asparagine 359. Cystine bridges form between cysteine 299–cysteine 364 and cysteine 386–cysteine 398. Residues asparagine 400 and asparagine 406 are each glycosylated (N-linked (GlcNAc...) asparagine). Intrachain disulfides connect cysteine 521/cysteine 539, cysteine 527/cysteine 562, cysteine 530/cysteine 546, and cysteine 542/cysteine 552. IPT/TIG domains lie at 564–656, 658–740, and 743–837; these read PAVY…FSYV, PVIT…FSYR, and PVVS…LTYV. Threonine 583 is a glycosylation site (O-linked (Man) threonine). Residues asparagine 608 and asparagine 636 are each glycosylated (N-linked (GlcNAc...) asparagine). Threonine 677 and threonine 762 each carry an O-linked (Man) threonine glycan. Asparagine 786 and asparagine 880 each carry an N-linked (GlcNAc...) asparagine glycan. The helical transmembrane segment at 936–956 threads the bilayer; sequence LIIGAVSISVVVLLVSGLFLW. The Cytoplasmic portion of the chain corresponds to 957–1379; that stretch reads LRKRKHKDLG…LPSQDNIDGE (423 aa). Serine 967 bears the Phosphoserine mark. Threonine 978 carries the post-translational modification Phosphothreonine. 3 positions are modified to phosphoserine: serine 991, serine 998, and serine 1001. At tyrosine 1004 the chain carries Phosphotyrosine. The Protein kinase domain maps to 1079–1346; it reads VHFNEVIGRG…RISSIFSTFI (268 aa). ATP contacts are provided by residues 1085 to 1093 and lysine 1111; that span reads IGRGHFGCV. The Proton acceptor role is filled by aspartate 1205. The segment at 1213–1382 is interaction with RANBP9; sequence LDEKFTVKVA…QDNIDGEANT (170 aa). At tyrosine 1231 the chain carries Phosphotyrosine. Tyrosine 1235 and tyrosine 1236 each carry phosphotyrosine; by autocatalysis. Threonine 1290 is modified (phosphothreonine). The interval 1321–1360 is interaction with MUC20; that stretch reads WHPKAEMRPSVSELVSRISSIFSTFIGEHYVHVNATYVNV. Residues tyrosine 1350 and tyrosine 1357 each carry the phosphotyrosine; by autocatalysis modification. Residue tyrosine 1366 is modified to Phosphotyrosine.

It belongs to the protein kinase superfamily. Tyr protein kinase family. As to quaternary structure, heterodimer made of an alpha chain (50 kDa) and a beta chain (145 kDa) which are disulfide linked. Binds PLXNB1. Interacts when phosphorylated with downstream effectors including STAT3, PIK3R1, SRC, PCLG1, GRB2 and GAB1. Interacts with SPSB1, SPSB2 and SPSB4. Interacts with INPP5D/SHIP1. When phosphorylated at Tyr-1357, interacts with INPPL1/SHIP2. Interacts with RANBP9 and RANBP10, as well as SPSB1, SPSB2, SPSB3 and SPSB4. SPSB1 binding occurs in the presence and in the absence of HGF, however HGF treatment has a positive effect on this interaction. Interacts with MUC20; prevents interaction with GRB2 and suppresses hepatocyte growth factor-induced cell proliferation. Interacts with GRB10. Interacts with PTPN1 and PTPN2. Interacts with HSP90AA1 and HSP90AB1; the interaction suppresses MET kinase activity. Interacts with tensin TNS3. Interacts (when phosphorylated) with tensin TNS4 (via SH2 domain); the interaction increases MET protein stability by inhibiting MET endocytosis and subsequent lysosomal degradation. In terms of processing, autophosphorylated in response to ligand binding on Tyr-1235 and Tyr-1236 in the kinase domain leading to further phosphorylation of Tyr-1350 and Tyr-1357 in the C-terminal multifunctional docking site. Dephosphorylated by PTPRJ at Tyr-1350 and Tyr-1366. Dephosphorylated by PTPN1 and PTPN2. Ubiquitinated. Ubiquitination by CBL regulates the receptor stability and activity through proteasomal degradation. Post-translationally, O-mannosylation of IPT/TIG domains by TMEM260 is required for protein maturation. O-mannosylated residues are composed of single mannose glycans that are not elongated or modified. As to expression, expressed at highest levels in lung, liver and kidney, also expressed in stomach, intestine, spleen, testis and brain. Not expressed in heart or muscle.

The protein localises to the membrane. The catalysed reaction is L-tyrosyl-[protein] + ATP = O-phospho-L-tyrosyl-[protein] + ADP + H(+). With respect to regulation, in its inactive state, the C-terminal tail interacts with the catalytic domain and inhibits the kinase activity. Upon ligand binding, the C-terminal tail is displaced and becomes phosphorylated, thus increasing the kinase activity. Its function is as follows. Receptor tyrosine kinase that transduces signals from the extracellular matrix into the cytoplasm by binding to hepatocyte growth factor/HGF ligand. Regulates many physiological processes including proliferation, scattering, morphogenesis and survival. Ligand binding at the cell surface induces autophosphorylation of MET on its intracellular domain that provides docking sites for downstream signaling molecules. Following activation by ligand, interacts with the PI3-kinase subunit PIK3R1, PLCG1, SRC, GRB2, STAT3 or the adapter GAB1. Recruitment of these downstream effectors by MET leads to the activation of several signaling cascades including the RAS-ERK, PI3 kinase-AKT, or PLCgamma-PKC. The RAS-ERK activation is associated with the morphogenetic effects while PI3K/AKT coordinates prosurvival effects. During embryonic development, MET signaling plays a role in gastrulation, development and migration of muscles and neuronal precursors, angiogenesis and kidney formation. In adults, participates in wound healing as well as organ regeneration and tissue remodeling. Also promotes differentiation and proliferation of hematopoietic cells. This chain is Hepatocyte growth factor receptor (Met), found in Rattus norvegicus (Rat).